The following is an 81-amino-acid chain: Cortexin-2 (81 aa).

A helical membrane pass occupies residues threonine 29–phenylalanine 49.

It belongs to the cortexin family.

It is found in the membrane. This is Cortexin-2 (Ctxn2) from Mus musculus (Mouse).